Reading from the N-terminus, the 292-residue chain is NAD kinase (292 aa).

Residue Asp73 is the Proton acceptor of the active site. Residues 73 to 74 (DG), 147 to 148 (NE), His158, Arg175, Asp177, 188 to 193 (TAYSLS), and Gln247 each bind NAD(+).

It belongs to the NAD kinase family. A divalent metal cation is required as a cofactor.

It is found in the cytoplasm. It carries out the reaction NAD(+) + ATP = ADP + NADP(+) + H(+). Functionally, involved in the regulation of the intracellular balance of NAD and NADP, and is a key enzyme in the biosynthesis of NADP. Catalyzes specifically the phosphorylation on 2'-hydroxyl of the adenosine moiety of NAD to yield NADP. The chain is NAD kinase from Salmonella choleraesuis (strain SC-B67).